A 401-amino-acid polypeptide reads, in one-letter code: Argininosuccinate synthase (401 aa).

Residue 8–16 participates in ATP binding; it reads AYSGGLDTS. Tyr85 serves as a coordination point for L-citrulline. Residue Gly115 participates in ATP binding. L-aspartate-binding residues include Thr117, Asn121, and Asp122. An L-citrulline-binding site is contributed by Asn121. The L-citrulline site is built by Arg125, Ser173, Glu258, and Tyr270.

The protein belongs to the argininosuccinate synthase family. Type 1 subfamily. As to quaternary structure, homotetramer.

The protein localises to the cytoplasm. The catalysed reaction is L-citrulline + L-aspartate + ATP = 2-(N(omega)-L-arginino)succinate + AMP + diphosphate + H(+). The protein operates within amino-acid biosynthesis; L-arginine biosynthesis; L-arginine from L-ornithine and carbamoyl phosphate: step 2/3. The sequence is that of Argininosuccinate synthase from Staphylococcus carnosus (strain TM300).